Here is a 430-residue protein sequence, read N- to C-terminus: Trigger factor (430 aa).

The region spanning 163–248 (GDTVVFDFAG…IHEIKAQELP (86 aa)) is the PPIase FKBP-type domain.

The protein belongs to the FKBP-type PPIase family. Tig subfamily.

The protein resides in the cytoplasm. The enzyme catalyses [protein]-peptidylproline (omega=180) = [protein]-peptidylproline (omega=0). Its function is as follows. Involved in protein export. Acts as a chaperone by maintaining the newly synthesized protein in an open conformation. Functions as a peptidyl-prolyl cis-trans isomerase. This Exiguobacterium sibiricum (strain DSM 17290 / CCUG 55495 / CIP 109462 / JCM 13490 / 255-15) protein is Trigger factor.